The following is a 274-amino-acid chain: MAALDGLPPLRDVIQRHGLDAKKALGQNFLLDLNLTQKIARTAGPLEDVTVIEVGPGPGGLTRAILALGAKKVVAIERDSRCLPALAEIGAHYPGRLDIIEDDALKVDFEALADGPVRIIANLPYNVGTQLLVNWLLPGLWPPFWQSMTLMFQREVGLRIVAGADDDHYGRLGVLCGWRTKARLAFDVPPQAFTPPPKVTSTVVHLEPVEAPIPCSPAVLEKVTQAAFGQRRKMLRQSLKPLGGEALLAKAGIDPQRRAETLTVEEFCRLANCL.

6 residues coordinate S-adenosyl-L-methionine: N28, L30, G55, E77, D103, and N122.

Belongs to the class I-like SAM-binding methyltransferase superfamily. rRNA adenine N(6)-methyltransferase family. RsmA subfamily.

It is found in the cytoplasm. It carries out the reaction adenosine(1518)/adenosine(1519) in 16S rRNA + 4 S-adenosyl-L-methionine = N(6)-dimethyladenosine(1518)/N(6)-dimethyladenosine(1519) in 16S rRNA + 4 S-adenosyl-L-homocysteine + 4 H(+). Its function is as follows. Specifically dimethylates two adjacent adenosines (A1518 and A1519) in the loop of a conserved hairpin near the 3'-end of 16S rRNA in the 30S particle. May play a critical role in biogenesis of 30S subunits. The polypeptide is Ribosomal RNA small subunit methyltransferase A (Rhizobium meliloti (strain 1021) (Ensifer meliloti)).